The sequence spans 425 residues: G protein-activated inward rectifier potassium channel 2 (425 aa).

Residues 1 to 91 (MTMAKLTESM…IFTTLVDLKW (91 aa)) lie on the Cytoplasmic side of the membrane. Residues Ser-18 and Ser-25 each carry the phosphoserine modification. Residues 92–116 (RFNLLIFVMVYTVTWLFFGMIWWLI) traverse the membrane as a helical segment. Topologically, residues 117–140 (AYIRGDMDHIEDPSWTPCVTNLNG) are extracellular. The helical; Pore-forming intramembrane region spans 141 to 152 (FVSAFLFSIETE). The pore-forming intramembrane region spans 153-159 (TTIGYGY). The Selectivity filter motif lies at 154–159 (TIGYGY). Topologically, residues 160 to 168 (RVITDKCPE) are extracellular. A helical transmembrane segment spans residues 169–190 (GIILLLIQSVLGSIVNAFMVGC). The Cytoplasmic portion of the chain corresponds to 191–425 (MFVKISQPKK…VANLENESKV (235 aa)). Residues 392 to 425 (NQHAELETEEEEKNPEELTERNGDVANLENESKV) are disordered. Residues 422-425 (ESKV) carry the PDZ-binding motif.

It belongs to the inward rectifier-type potassium channel (TC 1.A.2.1) family. KCNJ6 subfamily. Associates with KCNJ3/GIRK1to form a G-protein-activated heteromultimer pore-forming unit. Associates with KCNJ5/GRIK4 to form a G-protein-activated heteromultimer pore-forming unit. The resulting inward current is much larger. Interacts (via PDZ-binding motif) with SNX27 (via PDZ domain); the interaction is required when endocytosed to prevent degradation in lysosomes and promote recycling to the plasma membrane. In terms of assembly, associates with KCNJ3/GRIK1 to form a G-protein-activated heteromultimer pore-forming unit. As to quaternary structure, associates with KCNJ3/GRIK1 to form a G-protein-activated heteromultimer pore-forming unit. The resulting inward current is much larger. As to expression, expressed in the brain.

The protein resides in the membrane. The enzyme catalyses K(+)(in) = K(+)(out). Its activity is regulated as follows. Activated by phosphatidylinositol 4,5 biphosphate (PtdIns(4,5)P2). Its function is as follows. Inward rectifier potassium channels are characterized by a greater tendency to allow potassium to flow into the cell rather than out of it. Their voltage dependence is regulated by the concentration of extracellular potassium; as external potassium is raised, the voltage range of the channel opening shifts to more positive voltages. The inward rectification is mainly due to the blockage of outward current by internal magnesium. This potassium channel is controlled by G proteins. Forms a functional channel in association with KCNJ3/GIRK1. In terms of biological role, inward rectifier potassium channels are characterized by a greater tendency to allow potassium to flow into the cell rather than out of it. Their voltage dependence is regulated by the concentration of extracellular potassium; as external potassium is raised, the voltage range of the channel opening shifts to more positive voltages. The inward rectification is mainly due to the blockage of outward current by internal magnesium. This potassium channel is controlled by G proteins. In Mus musculus (Mouse), this protein is G protein-activated inward rectifier potassium channel 2 (Kcnj6).